A 241-amino-acid chain; its full sequence is Large ribosomal subunit protein uL3 (241 aa).

2 disordered regions span residues 139 to 164 (VSHR…KMPG) and 215 to 241 (DAPK…QEGA). At Gln151 the chain carries N5-methylglutamine.

It belongs to the universal ribosomal protein uL3 family. In terms of assembly, part of the 50S ribosomal subunit. Forms a cluster with proteins L14 and L19. Methylated by PrmB.

One of the primary rRNA binding proteins, it binds directly near the 3'-end of the 23S rRNA, where it nucleates assembly of the 50S subunit. This chain is Large ribosomal subunit protein uL3, found in Rhodopseudomonas palustris (strain BisB5).